We begin with the raw amino-acid sequence, 176 residues long: Peptidyl-prolyl cis-trans isomerase cyp6 (176 aa).

In terms of domain architecture, PPIase cyclophilin-type spans 10 to 173 (FFDIAVNGQH…AKIEITDCGE (164 aa)).

This sequence belongs to the cyclophilin-type PPIase family.

The enzyme catalyses [protein]-peptidylproline (omega=180) = [protein]-peptidylproline (omega=0). PPIases accelerate the folding of proteins. It catalyzes the cis-trans isomerization of proline imidic peptide bonds in oligopeptides. The polypeptide is Peptidyl-prolyl cis-trans isomerase cyp6 (cyp6) (Rhizopus delemar (strain RA 99-880 / ATCC MYA-4621 / FGSC 9543 / NRRL 43880) (Mucormycosis agent)).